The following is a 1076-amino-acid chain: DNA-directed RNA polymerase subunit beta (1076 aa).

It belongs to the RNA polymerase beta chain family. In terms of assembly, in plastids the minimal PEP RNA polymerase catalytic core is composed of four subunits: alpha, beta, beta', and beta''. When a (nuclear-encoded) sigma factor is associated with the core the holoenzyme is formed, which can initiate transcription.

Its subcellular location is the plastid. It localises to the chloroplast. It catalyses the reaction RNA(n) + a ribonucleoside 5'-triphosphate = RNA(n+1) + diphosphate. Its function is as follows. DNA-dependent RNA polymerase catalyzes the transcription of DNA into RNA using the four ribonucleoside triphosphates as substrates. The protein is DNA-directed RNA polymerase subunit beta of Hordeum vulgare (Barley).